Reading from the N-terminus, the 386-residue chain is Heat-inducible transcription repressor HrcA (386 aa).

It belongs to the HrcA family.

Negative regulator of class I heat shock genes (grpE-dnaK-dnaJ and groELS operons). Prevents heat-shock induction of these operons. This is Heat-inducible transcription repressor HrcA from Chlamydia felis (strain Fe/C-56) (Chlamydophila felis).